We begin with the raw amino-acid sequence, 495 residues long: Homeobox protein ceh-21 (495 aa).

The segment covering 1–14 (MSQQFQASSGTGSA) has biased composition (polar residues). Disordered regions lie at residues 1–24 (MSQQ…TEHE) and 89–267 (TAES…PGGE). Positions 106-120 (LEEKSDKSSDGDGTS) are enriched in basic and acidic residues. A compositionally biased stretch (acidic residues) spans 132 to 145 (NETEEDHEEKEDEA). Residues 149 to 162 (SRRESTRLKRKLLE) are compositionally biased toward basic and acidic residues. Polar residues-rich tracts occupy residues 163–179 (SQKT…ASSK) and 199–217 (TPEQ…TVRA). The segment covering 218 to 233 (SSTCGSSVSSTSTVSS) has biased composition (low complexity). The segment covering 242–254 (RATETPKLEELAP) has biased composition (basic and acidic residues). A DNA-binding region (CUT) is located at residues 284–370 (NAQIGDDEEL…VRRALCFLPK (87 aa)). Positions 389–449 (KTVKVIRLTF…MNSRRRLRID (61 aa)) form a DNA-binding region, homeobox. Residues 450-473 (QQISRSSRSTGNGADTEDELDEED) are disordered. Over residues 464–473 (DTEDELDEED) the composition is skewed to acidic residues.

It belongs to the CUT homeobox family.

Its subcellular location is the nucleus. Functionally, probable DNA-binding regulatory protein involved in cell-fate specification. This is Homeobox protein ceh-21 (ceh-21) from Caenorhabditis elegans.